Reading from the N-terminus, the 355-residue chain is Peptide chain release factor 1 (355 aa).

Gln-231 is modified (N5-methylglutamine). Positions 283-303 are disordered; that stretch reads NAQNKEARKTQVGSGDRSERI.

Belongs to the prokaryotic/mitochondrial release factor family. Methylated by PrmC. Methylation increases the termination efficiency of RF1.

It is found in the cytoplasm. In terms of biological role, peptide chain release factor 1 directs the termination of translation in response to the peptide chain termination codons UAG and UAA. The chain is Peptide chain release factor 1 from Helicobacter hepaticus (strain ATCC 51449 / 3B1).